The following is a 339-amino-acid chain: Trace amine-associated receptor 1 (339 aa).

Over 1–24 the chain is Extracellular; that stretch reads MMPFCHNIINISCVKNNWSNDVRA. Intrachain disulfides connect cysteine 5/cysteine 178, cysteine 13/cysteine 88, and cysteine 96/cysteine 182. 2 N-linked (GlcNAc...) asparagine glycosylation sites follow: asparagine 10 and asparagine 17. A helical membrane pass occupies residues 25-49; it reads SLYSLMVLIILTTLVGNLIVIVSIS. The Cytoplasmic portion of the chain corresponds to 50-59; it reads HFKQLHTPTN. The helical transmembrane segment at 60-81 threads the bilayer; that stretch reads WLIHSMATVDFLLGCLVMPYSM. Over 82–96 the chain is Extracellular; the sequence is VRSAEHCWYFGEVFC. Residues 97-119 form a helical membrane-spanning segment; that stretch reads KIHTSTDIMLSSASIFHLSFISI. Aspartate 103 serves as a coordination point for 2-phenylethylamine. Residues 120–139 are Cytoplasmic-facing; it reads DRYYAVCDPLRYKAKMNILV. The chain crosses the membrane as a helical span at residues 140–161; it reads ICVMIFISWSVPAVFAFGMIFL. Residues 162-188 are Extracellular-facing; it reads ELNFKGAEEIYYKHVHCRGGCSVFFSK. Residues 175–186 form an extracellular Loop 2 (ECL2) region; the sequence is HVHCRGGCSVFF. The helical transmembrane segment at 189 to 211 threads the bilayer; it reads ISGVLTFMTSFYIPGSIMLCVYY. Residues 212-249 lie on the Cytoplasmic side of the membrane; sequence RIYLIAKEQARLISDANQKLQIGLEMKNGISQSKERKA. The helical transmembrane segment at 250–273 threads the bilayer; that stretch reads VKTLGIVMGVFLICWCPFFICTVM. The Extracellular portion of the chain corresponds to 274 to 286; sequence DPFLHYIIPPTLN. Residues 287–307 traverse the membrane as a helical segment; sequence DVLIWFGYLNSTFNPMVYAFF. Residues 308–339 are Cytoplasmic-facing; that stretch reads YPWFRKALKMMLFGKIFQKDSSRCKLFLELSS.

This sequence belongs to the G-protein coupled receptor 1 family. As to expression, expressed at low level in both the central and peripheral nervous system. Moderately expressed in stomach. Low levels in amygdala, kidney, and lung, and small intestine. Trace amounts in cerebellum, dorsal root ganglia, hippocampus, hypothalamus, liver, medulla, pancreas, pituitary, pontine reticular formation, prostate, skeletal muscle and spleen.

It is found in the endomembrane system. It localises to the endoplasmic reticulum membrane. The protein localises to the cell membrane. Its activity is regulated as follows. Activated by SEP-363856 small molecule: IHCH-7179 acts both as an agonist activator for HTR1A and TAAR1. Functionally, intracellular G-protein coupled receptor for trace amines, which recognizes endogenous amine-containing metabolites such as beta-phenylethylamine (beta-PEA), 3-iodothyronamine (T1AM), isoamylamine (IAA), cadaverine (CAD), cyclohexylamine (CHA), p-tyramine (p-TYR), trimethylamine (TMA), octopamine and tryptamine. Also functions as a receptor for various drugs and psychoactive substances, such as amphetamine and methamphetamine. Unresponsive to classical biogenic amines, such as epinephrine and histamine and only partially activated by dopamine and serotonin. Expressed in both the central and peripheral nervous system: TAAR1 activation regulates the activity of several neurotransmitter signaling pathways by (1) decreasing the basal firing rates of the neurons involved and by (2) lowering the sensitivity of receptors to neurotransmitters. Ligand binding causes a conformation change that triggers signaling via guanine nucleotide-binding proteins (G proteins) and modulates the activity of downstream effectors. TAAR1 is coupled with different G(i)/G(o)-, G(s)- or G(q)/G(11) classes of G alpha proteins depending on the ligand. CAD-binding is coupled to G(i)/G(o) G alpha proteins and mediates inhibition of adenylate cyclase activity. T1AM- or beta-PEA-binding is coupled to G(s) G alpha proteins and mediates activation of adenylate cyclase activity. CHA- or IAA-binding is coupled to G(q)/G(11) G alpha proteins and activates phospholipase C-beta, releasing diacylglycerol (DAG) and inositol 1,4,5-trisphosphate (IP3) second messengers. TMA-binding is coupled with all three G(i)/G(o)-, G(s)- or G(q)/G(11) G alpha protein subtypes. Amphetamine-binding is coupled with G(s)- or G(12)/G(13) G alpha protein subtypes. This is Trace amine-associated receptor 1 from Homo sapiens (Human).